Consider the following 266-residue polypeptide: Family of serine hydrolases 3 (266 aa).

Active-site charge relay system residues include Ser-117, Asp-180, and His-209.

The protein belongs to the AB hydrolase 3 family.

In terms of biological role, serine hydrolase of unknown specificity. The protein is Family of serine hydrolases 3 (FSH3) of Saccharomyces cerevisiae (strain ATCC 204508 / S288c) (Baker's yeast).